The following is a 332-amino-acid chain: Ribosomal RNA small subunit methyltransferase C (332 aa).

Belongs to the methyltransferase superfamily. RsmC family. In terms of assembly, monomer.

The protein resides in the cytoplasm. It carries out the reaction guanosine(1207) in 16S rRNA + S-adenosyl-L-methionine = N(2)-methylguanosine(1207) in 16S rRNA + S-adenosyl-L-homocysteine + H(+). Specifically methylates the guanine in position 1207 of 16S rRNA in the 30S particle. This Pseudomonas putida (strain ATCC 47054 / DSM 6125 / CFBP 8728 / NCIMB 11950 / KT2440) protein is Ribosomal RNA small subunit methyltransferase C.